Here is a 269-residue protein sequence, read N- to C-terminus: Shikimate dehydrogenase (NADP(+)) (269 aa).

Shikimate is bound by residues 17 to 19 (SKS) and T64. K68 functions as the Proton acceptor in the catalytic mechanism. An NADP(+)-binding site is contributed by E80. Shikimate-binding residues include N89 and D105. NADP(+)-binding positions include 130–134 (GAGGA), 154–159 (NRTRAK), and M213. Y215 lines the shikimate pocket. NADP(+) is bound at residue G237.

It belongs to the shikimate dehydrogenase family. In terms of assembly, homodimer.

The enzyme catalyses shikimate + NADP(+) = 3-dehydroshikimate + NADPH + H(+). It functions in the pathway metabolic intermediate biosynthesis; chorismate biosynthesis; chorismate from D-erythrose 4-phosphate and phosphoenolpyruvate: step 4/7. Functionally, involved in the biosynthesis of the chorismate, which leads to the biosynthesis of aromatic amino acids. Catalyzes the reversible NADPH linked reduction of 3-dehydroshikimate (DHSA) to yield shikimate (SA). The chain is Shikimate dehydrogenase (NADP(+)) from Neisseria meningitidis serogroup C / serotype 2a (strain ATCC 700532 / DSM 15464 / FAM18).